The sequence spans 302 residues: MPPQKIETGHSDTIHDVVMDYYGKRVATASSDCTIKITGVSNSGGSQHLATLTGHRGPVWQVAWAHPKFGSLLASCSYDGQIILWKEGNQNQWTQAHVFTDHKVSVNSIAWAPHELGLSLACGASDGNISVFSARADGGWDTTKIDQAHPVGVTSVSWAPATEPGALVSSGMIDPVYKLASGGCDSTVKVWKFSNGSWKMDCFPALNKHTDWVRDVAWAPNLGLPKSTIASGSEDGKVIIWTIGKEGEQWEGTVLKDFKTPVWRVSWSLTGNLLAVSDGNNNVTVWKESVDGEWEQVTVVEP.

WD repeat units lie at residues 9–48 (GHSDTIHDVVMDYYGKRVATASSDCTIKITGVSNSGGSQH), 54–95 (GHRG…QWTQ), 101–142 (DHKV…GWDT), 148–201 (AHPV…WKMD), 208–251 (KHTD…EQWE), and 257–296 (DFKTPVWRVSWSLTGNLLAVSDGNNNVTVWKESVDGEWEQ).

It belongs to the WD repeat SEC13 family. As to quaternary structure, interacts with MAG5, SEC31A and SEC31B.

The protein localises to the golgi apparatus. The protein resides in the endoplasmic reticulum. Functionally, required for protein transport from the endoplasmic reticulum to the Golgi apparatus. The sequence is that of Protein transport protein SEC13 homolog A from Arabidopsis thaliana (Mouse-ear cress).